The following is a 261-amino-acid chain: tRNA pseudouridine synthase A (261 aa).

The active-site Nucleophile is the Asp-51. Tyr-109 lines the substrate pocket.

Belongs to the tRNA pseudouridine synthase TruA family. In terms of assembly, homodimer.

It carries out the reaction uridine(38/39/40) in tRNA = pseudouridine(38/39/40) in tRNA. Formation of pseudouridine at positions 38, 39 and 40 in the anticodon stem and loop of transfer RNAs. The protein is tRNA pseudouridine synthase A of Shewanella halifaxensis (strain HAW-EB4).